We begin with the raw amino-acid sequence, 344 residues long: N-acetyl-gamma-glutamyl-phosphate reductase (344 aa).

Residue C149 is part of the active site.

This sequence belongs to the NAGSA dehydrogenase family. Type 1 subfamily.

Its subcellular location is the cytoplasm. The enzyme catalyses N-acetyl-L-glutamate 5-semialdehyde + phosphate + NADP(+) = N-acetyl-L-glutamyl 5-phosphate + NADPH + H(+). The protein operates within amino-acid biosynthesis; L-arginine biosynthesis; N(2)-acetyl-L-ornithine from L-glutamate: step 3/4. Catalyzes the NADPH-dependent reduction of N-acetyl-5-glutamyl phosphate to yield N-acetyl-L-glutamate 5-semialdehyde. In Shouchella clausii (strain KSM-K16) (Alkalihalobacillus clausii), this protein is N-acetyl-gamma-glutamyl-phosphate reductase.